Consider the following 341-residue polypeptide: Putative ubiquitin-like-specific protease 1B (341 aa).

Residues histidine 231, aspartate 248, and cysteine 300 contribute to the active site.

The protein belongs to the peptidase C48 family.

In terms of biological role, protease that catalyzes two essential functions in the SUMO pathway: processing of full-length SUMOs to their mature forms and deconjugation of SUMO from targeted proteins. This chain is Putative ubiquitin-like-specific protease 1B (ULP1B), found in Arabidopsis thaliana (Mouse-ear cress).